Here is a 234-residue protein sequence, read N- to C-terminus: MVIGGDECDINEHRFLVAFFNTTGFFCGGTLINPEWVVTAAHCDSTNFQMQLGVHSKKVLNEDEQTRNPKEKFICPNKNNNEVLDKDIMLIKLDKPISNSKHIAPLSLPSSPPSVGSVCRIMGWGSITPVKETFPDVPYCANINLLDHAVCQTGYPSCWRNTTLCAGFLEGGKDTCGGDSGGPLICNGQFQGIVSYGAHSCGQGPKPGIYTNVFDYTDWIQRNIAGNTDATCPP.

Residue Met1 is a propeptide. One can recognise a Peptidase S1 domain in the interval 2–225 (VIGGDECDIN…YTDWIQRNIA (224 aa)). 6 cysteine pairs are disulfide-bonded: Cys8–Cys140, Cys27–Cys43, Cys75–Cys232, Cys119–Cys186, Cys151–Cys165, and Cys176–Cys201. An N-linked (GlcNAc...) asparagine glycan is attached at Asn21. Residues His42 and Asp87 each act as charge relay system in the active site. Ser180 functions as the Charge relay system in the catalytic mechanism.

It belongs to the peptidase S1 family. Snake venom subfamily. As to quaternary structure, monomer. In terms of tissue distribution, expressed by the venom gland.

Its subcellular location is the secreted. Its function is as follows. Thrombin-like snake venom serine protease. Has arginyl esterase and fibrinogen clotting activities. In Deinagkistrodon acutus (Hundred-pace snake), this protein is Thrombin-like enzyme acutin.